Here is a 388-residue protein sequence, read N- to C-terminus: Succinate--CoA ligase [ADP-forming] subunit beta (388 aa).

The region spanning 9–244 (KEILRKFGVA…PDEEDPKETQ (236 aa)) is the ATP-grasp domain. Residues lysine 46, 53–55 (GRG), glutamate 99, cysteine 102, and glutamate 107 each bind ATP. Residues asparagine 199 and aspartate 213 each coordinate Mg(2+). Residues asparagine 264 and 321-323 (GIM) contribute to the substrate site.

Belongs to the succinate/malate CoA ligase beta subunit family. In terms of assembly, heterotetramer of two alpha and two beta subunits. Mg(2+) serves as cofactor.

The catalysed reaction is succinate + ATP + CoA = succinyl-CoA + ADP + phosphate. It carries out the reaction GTP + succinate + CoA = succinyl-CoA + GDP + phosphate. Its pathway is carbohydrate metabolism; tricarboxylic acid cycle; succinate from succinyl-CoA (ligase route): step 1/1. Succinyl-CoA synthetase functions in the citric acid cycle (TCA), coupling the hydrolysis of succinyl-CoA to the synthesis of either ATP or GTP and thus represents the only step of substrate-level phosphorylation in the TCA. The beta subunit provides nucleotide specificity of the enzyme and binds the substrate succinate, while the binding sites for coenzyme A and phosphate are found in the alpha subunit. This chain is Succinate--CoA ligase [ADP-forming] subunit beta, found in Anaeromyxobacter dehalogenans (strain 2CP-1 / ATCC BAA-258).